Here is a 432-residue protein sequence, read N- to C-terminus: Serine hydroxymethyltransferase (432 aa).

(6S)-5,6,7,8-tetrahydrofolate contacts are provided by residues leucine 127 and 131–133 (GHL). Lysine 236 is subject to N6-(pyridoxal phosphate)lysine.

Belongs to the SHMT family. Homodimer. Requires pyridoxal 5'-phosphate as cofactor.

It localises to the cytoplasm. It catalyses the reaction (6R)-5,10-methylene-5,6,7,8-tetrahydrofolate + glycine + H2O = (6S)-5,6,7,8-tetrahydrofolate + L-serine. Its pathway is one-carbon metabolism; tetrahydrofolate interconversion. It participates in amino-acid biosynthesis; glycine biosynthesis; glycine from L-serine: step 1/1. In terms of biological role, catalyzes the reversible interconversion of serine and glycine with tetrahydrofolate (THF) serving as the one-carbon carrier. This reaction serves as the major source of one-carbon groups required for the biosynthesis of purines, thymidylate, methionine, and other important biomolecules. Also exhibits THF-independent aldolase activity toward beta-hydroxyamino acids, producing glycine and aldehydes, via a retro-aldol mechanism. The sequence is that of Serine hydroxymethyltransferase from Rhizobium rhizogenes (strain K84 / ATCC BAA-868) (Agrobacterium radiobacter).